A 95-amino-acid chain; its full sequence is Small ribosomal subunit protein bS18 (95 aa).

Belongs to the bacterial ribosomal protein bS18 family. In terms of assembly, part of the 30S ribosomal subunit. Forms a tight heterodimer with protein bS6.

Binds as a heterodimer with protein bS6 to the central domain of the 16S rRNA, where it helps stabilize the platform of the 30S subunit. The chain is Small ribosomal subunit protein bS18 from Ehrlichia canis (strain Jake).